Here is a 334-residue protein sequence, read N- to C-terminus: GTPase Obg (334 aa).

Residues 1–159 form the Obg domain; sequence MRFVDEVVIK…KEVRLELNLL (159 aa). The OBG-type G domain maps to 160-331; it reads ADIALLGLPN…LAKKLNEFLH (172 aa). GTP is bound by residues 166-173, 191-195, 212-215, 282-285, and 312-314; these read GLPNAGKS, FTTMY, DIPG, NKID, and SAA. Mg(2+)-binding residues include S173 and T193.

Belongs to the TRAFAC class OBG-HflX-like GTPase superfamily. OBG GTPase family. In terms of assembly, monomer. Mg(2+) serves as cofactor.

The protein resides in the cytoplasm. Functionally, an essential GTPase which binds GTP, GDP and possibly (p)ppGpp with moderate affinity, with high nucleotide exchange rates and a fairly low GTP hydrolysis rate. Plays a role in control of the cell cycle, stress response, ribosome biogenesis and in those bacteria that undergo differentiation, in morphogenesis control. The sequence is that of GTPase Obg from Francisella philomiragia subsp. philomiragia (strain ATCC 25017 / CCUG 19701 / FSC 153 / O#319-036).